The sequence spans 280 residues: Dopamine receptor-interacting protein 1 (280 aa).

As to quaternary structure, interacts with DRD1, the dopamine D1 receptor.

In terms of biological role, could be a regulator of the dopamine receptor signaling pathway. The protein is Dopamine receptor-interacting protein 1 (DORIP1) of Bos taurus (Bovine).